The sequence spans 110 residues: Nucleoid-associated protein RALTA_A1934 (110 aa).

A compositionally biased stretch (polar residues) spans 88–98; the sequence is TTQEKMGSMTS. The segment at 88–110 is disordered; that stretch reads TTQEKMGSMTSGLPLPPGFKLPF. A compositionally biased stretch (pro residues) spans 101 to 110; the sequence is PLPPGFKLPF.

It belongs to the YbaB/EbfC family. As to quaternary structure, homodimer.

Its subcellular location is the cytoplasm. The protein resides in the nucleoid. Its function is as follows. Binds to DNA and alters its conformation. May be involved in regulation of gene expression, nucleoid organization and DNA protection. This Cupriavidus taiwanensis (strain DSM 17343 / BCRC 17206 / CCUG 44338 / CIP 107171 / LMG 19424 / R1) (Ralstonia taiwanensis (strain LMG 19424)) protein is Nucleoid-associated protein RALTA_A1934.